Here is a 257-residue protein sequence, read N- to C-terminus: Phycoerythrobilin:ferredoxin oxidoreductase (257 aa).

It belongs to the HY2 family.

It carries out the reaction (3Z)-phycoerythrobilin + oxidized 2[4Fe-4S]-[ferredoxin] = 15,16-dihydrobiliverdin + reduced 2[4Fe-4S]-[ferredoxin] + 2 H(+). In terms of biological role, catalyzes the two-electron reduction of the C2 and C3(1) diene system of 15,16-dihydrobiliverdin. This chain is Phycoerythrobilin:ferredoxin oxidoreductase, found in Synechococcus sp. (strain CC9902).